Consider the following 814-residue polypeptide: Dimethyl sulfoxide reductase DmsA (814 aa).

Residues 1–45 (MKTKIPDAVLAAEVSRRGLVKTTAIGGLAMASSALTLPFSRIAHA) constitute a signal peptide (tat-type signal). Residues 56-118 (EKVIWSACTV…SMRRRVYNPD (63 aa)) form the 4Fe-4S Mo/W bis-MGD-type domain. [4Fe-4S] cluster contacts are provided by C63, C67, C71, and C104. Mo-bis(molybdopterin guanine dinucleotide) contacts are provided by residues 172 to 176 (LGGTM), S205, 244 to 245 (ET), 270 to 271 (ID), 291 to 293 (GTD), 386 to 387 (WG), R390, N488, 512 to 513 (ID), H701, 707 to 709 (HST), N788, and 804 to 805 (SH).

Belongs to the prokaryotic molybdopterin-containing oxidoreductase family. As to quaternary structure, heterotrimeric enzyme composed of a catalytic heterodimer (DmsAB) and a membrane anchor protein (DmsC). [4Fe-4S] cluster is required as a cofactor. Requires Mo-bis(molybdopterin guanine dinucleotide) as cofactor. Post-translationally, exported by the Tat system. The position of the signal peptide cleavage has been experimentally proven. Can also be exported by the Sec system.

Its subcellular location is the cell membrane. It catalyses the reaction dimethyl sulfide + a menaquinone + H2O = dimethyl sulfoxide + a menaquinol. With respect to regulation, inhibited by dithionite, sodium hydrogensulfite and tungstate. Its function is as follows. Catalyzes the reduction of dimethyl sulfoxide (DMSO) to dimethyl sulfide (DMS). DMSO reductase serves as the terminal reductase under anaerobic conditions, with DMSO being the terminal electron acceptor. Terminal reductase during anaerobic growth on various sulfoxides and N-oxide compounds. Allows E.coli to grow anaerobically on DMSO as respiratory oxidant. The protein is Dimethyl sulfoxide reductase DmsA (dmsA) of Escherichia coli (strain K12).